We begin with the raw amino-acid sequence, 308 residues long: Probable GTP 3',8-cyclase (308 aa).

Residues 4 to 224 (RFGRPLEDLR…QIRKKHFRPR (221 aa)) enclose the Radical SAM core domain. Arg-13 is a GTP binding site. [4Fe-4S] cluster contacts are provided by Cys-20, Cys-24, and Cys-27. Lys-60 is a binding site for GTP. Gly-64 contacts S-adenosyl-L-methionine. Residue Thr-90 participates in GTP binding. An S-adenosyl-L-methionine-binding site is contributed by Ser-114. Lys-151 serves as a coordination point for GTP. Positions 245 and 248 each coordinate [4Fe-4S] cluster. Position 250-252 (250-252 (RIR)) interacts with GTP. Cys-262 lines the [4Fe-4S] cluster pocket.

Belongs to the radical SAM superfamily. MoaA family. Requires [4Fe-4S] cluster as cofactor.

The enzyme catalyses GTP + AH2 + S-adenosyl-L-methionine = (8S)-3',8-cyclo-7,8-dihydroguanosine 5'-triphosphate + 5'-deoxyadenosine + L-methionine + A + H(+). It functions in the pathway cofactor biosynthesis; molybdopterin biosynthesis. Its function is as follows. Catalyzes the cyclization of GTP to (8S)-3',8-cyclo-7,8-dihydroguanosine 5'-triphosphate. The sequence is that of Probable GTP 3',8-cyclase from Saccharolobus islandicus (strain L.S.2.15 / Lassen #1) (Sulfolobus islandicus).